Here is a 901-residue protein sequence, read N- to C-terminus: HTH-type transcriptional regulator MalT (901 aa).

39–46 contributes to the ATP binding site; the sequence is SPAGYGKT. The 66-residue stretch at 829-894 folds into the HTH luxR-type domain; that stretch reads ELIRTSPLTQ…AAVQHAQKLL (66 aa). Positions 853 to 872 form a DNA-binding region, H-T-H motif; that stretch reads NEQIAGELEVAATTIKTHIR.

This sequence belongs to the MalT family. In terms of assembly, monomer in solution. Oligomerizes to an active state in the presence of the positive effectors ATP and maltotriose.

Activated by ATP and maltotriose, which are both required for DNA binding. Functionally, positively regulates the transcription of the maltose regulon whose gene products are responsible for uptake and catabolism of malto-oligosaccharides. Specifically binds to the promoter region of its target genes, recognizing a short DNA motif called the MalT box. This chain is HTH-type transcriptional regulator MalT, found in Shigella flexneri serotype 5b (strain 8401).